We begin with the raw amino-acid sequence, 337 residues long: Ral GTPase-activating protein subunit alpha-1 (337 aa).

Component of the heterodimeric RalGAP1 complex with RALGAPB. Heterodimerization is required for activity. Interacts with the HLH region of TCF3/isoform E12.

Its subcellular location is the cytoplasm. The protein resides in the nucleus. Its function is as follows. Catalytic subunit of the heterodimeric RalGAP1 complex which acts as a GTPase activator for the Ras-like small GTPases RALA and RALB. This Sus scrofa (Pig) protein is Ral GTPase-activating protein subunit alpha-1.